The following is a 1085-amino-acid chain: Phosphorylase b kinase regulatory subunit beta (1085 aa).

Residues S10, S19, and S693 each carry the phosphoserine modification. Calmodulin-binding regions lie at residues 760–787 and 912–943; these read RVYRRAGSKKLWSVVRRAASLLNKVVDS and SGRCWLNRRQIDGSLNRTPPEFYDRVWQILER. C1082 carries S-farnesyl cysteine lipidation.

Belongs to the phosphorylase b kinase regulatory chain family. In terms of assembly, hexadecamer of 4 heterotetramers, each composed of alpha, beta, gamma, and delta subunits. Alpha (PHKA1 or PHKA2) and beta (PHKB) are regulatory subunits, gamma (PHKG1 or PHKG2) is the catalytic subunit, and delta is calmodulin. In terms of processing, although the final Cys may be farnesylated, the terminal tripeptide is probably not removed, and the C-terminus is not methylated.

It localises to the cell membrane. It functions in the pathway glycan biosynthesis; glycogen metabolism. With respect to regulation, by phosphorylation of various serine residues. Its function is as follows. Phosphorylase b kinase catalyzes the phosphorylation of serine in certain substrates, including troponin I. The beta chain acts as a regulatory unit and modulates the activity of the holoenzyme in response to phosphorylation. In Mus musculus (Mouse), this protein is Phosphorylase b kinase regulatory subunit beta (Phkb).